The following is a 309-amino-acid chain: Homoserine kinase (309 aa).

91–101 (PIGSGLGSSAC) contributes to the ATP binding site.

The protein belongs to the GHMP kinase family. Homoserine kinase subfamily.

It localises to the cytoplasm. It catalyses the reaction L-homoserine + ATP = O-phospho-L-homoserine + ADP + H(+). The protein operates within amino-acid biosynthesis; L-threonine biosynthesis; L-threonine from L-aspartate: step 4/5. Its function is as follows. Catalyzes the ATP-dependent phosphorylation of L-homoserine to L-homoserine phosphate. The protein is Homoserine kinase of Cronobacter sakazakii (strain ATCC BAA-894) (Enterobacter sakazakii).